Here is a 353-residue protein sequence, read N- to C-terminus: Deoxyribonuclease-2-alpha (353 aa).

A signal peptide spans 1-19 (MATLRSLLLAALLWVPAEA). Cysteines 22 and 161 form a disulfide. N-linked (GlcNAc...) asparagine glycosylation is found at Asn71, Asn88, Asn214, and Asn268. 2 disulfide bridges follow: Cys269–Cys349 and Cys310–Cys329. Residue His297 is part of the active site.

The protein belongs to the DNase II family. Highly expressed in fetal liver macrophages.

It is found in the lysosome. The enzyme catalyses Endonucleolytic cleavage to nucleoside 3'-phosphates and 3'-phosphooligonucleotide end-products.. Hydrolyzes DNA under acidic conditions with a preference for double-stranded DNA. Plays a major role in the clearance of nucleic acids generated through apoptosis, hence preventing autoinflammation. Necessary for proper fetal development and for definitive erythropoiesis in fetal liver and bone marrow, where it degrades nuclear DNA expelled from erythroid precursor cells. In Mus musculus (Mouse), this protein is Deoxyribonuclease-2-alpha (Dnase2).